The primary structure comprises 428 residues: tRNA(Ile2) 2-agmatinylcytidine synthetase TiaS (428 aa).

This sequence belongs to the TiaS family.

It localises to the cytoplasm. The enzyme catalyses cytidine(34) in tRNA(Ile2) + agmatine + ATP + H2O = 2-agmatinylcytidine(34) in tRNA(Ile2) + AMP + 2 phosphate + 2 H(+). Its function is as follows. ATP-dependent agmatine transferase that catalyzes the formation of 2-agmatinylcytidine (agm2C) at the wobble position (C34) of tRNA(Ile2), converting the codon specificity from AUG to AUA. The sequence is that of tRNA(Ile2) 2-agmatinylcytidine synthetase TiaS from Methanosarcina mazei (strain ATCC BAA-159 / DSM 3647 / Goe1 / Go1 / JCM 11833 / OCM 88) (Methanosarcina frisia).